The sequence spans 130 residues: Small ribosomal subunit protein uS9 (130 aa).

The protein belongs to the universal ribosomal protein uS9 family.

This is Small ribosomal subunit protein uS9 from Methylibium petroleiphilum (strain ATCC BAA-1232 / LMG 22953 / PM1).